The sequence spans 1766 residues: E3 ubiquitin-protein ligase listerin (1766 aa).

Basic residues predominate over residues 1–11 (MGGKNKQRTKG). A disordered region spans residues 1–20 (MGGKNKQRTKGNVRPSSSGR). HEAT repeat units follow at residues 100–138 (KGVL…KVKK), 193–231 (VLQD…SLLA), 292–329 (AEAP…TIED), 335–372 (NARK…KVPP), and 512–549 (EKTL…DEDE). The segment at 529-567 (KTATKPNNRKSLKVKFSDEDESERNTENGKITEVRSNSD) is disordered. Over residues 551-566 (ERNTENGKITEVRSNS) the composition is skewed to basic and acidic residues. HEAT repeat units follow at residues 606 to 644 (EQHL…ESQE), 672 to 710 (KDMH…KWIV), 916 to 953 (QVLI…NRTE), 1184 to 1227 (HLLP…MIRY), 1314 to 1355 (GIHN…YISK), and 1406 to 1447 (SKLM…TQEL). The RING-type zinc finger occupies 1715–1762 (CMICFSVIHGSNYSLPKKACRTCKKKFHSACLYKWFTSSNKSTCPLCR).

It belongs to the LTN1 family. As to quaternary structure, component of the ribosome quality control complex (RQC), composed of at least the E3 ubiquitin ligase LTN1 and NEMF associated with the 60S ribosomal subunit. The complex probably also contains TCF25 as well as VCP/p97 and its ubiquitin-binding cofactors.

It is found in the cytoplasm. The protein resides in the cytosol. The enzyme catalyses S-ubiquitinyl-[E2 ubiquitin-conjugating enzyme]-L-cysteine + [acceptor protein]-L-lysine = [E2 ubiquitin-conjugating enzyme]-L-cysteine + N(6)-ubiquitinyl-[acceptor protein]-L-lysine.. Its pathway is protein modification; protein ubiquitination. Functionally, E3 ubiquitin-protein ligase component of the ribosome quality control complex (RQC), a ribosome-associated complex that mediates ubiquitination and extraction of incompletely synthesized nascent chains for proteasomal degradation. Within the RQC complex, LTN1 is recruited to stalled 60S ribosomal subunits by NEMF and mediates ubiquitination of stalled nascent chains. Ubiquitination leads to VCP/p97 recruitment for extraction and degradation of the incomplete translation product. The protein is E3 ubiquitin-protein ligase listerin (LTN1) of Gallus gallus (Chicken).